The primary structure comprises 504 residues: Maturase K (504 aa).

The protein belongs to the intron maturase 2 family. MatK subfamily.

Its subcellular location is the plastid. It is found in the chloroplast. Its function is as follows. Usually encoded in the trnK tRNA gene intron. Probably assists in splicing its own and other chloroplast group II introns. The polypeptide is Maturase K (Matthiola incana (Common stock)).